The chain runs to 152 residues: TRAPP-associated protein TCA17 (152 aa).

Belongs to the TRAPP small subunits family. Sedlin subfamily. As to quaternary structure, interacts with the TRAPP II complex; TRAPP II subunits TRS33 and TRS65 are required for this interaction.

The protein localises to the golgi apparatus. The protein resides in the trans-Golgi network. Required, together with the TRAPP II subunit TRS33, for TRAPP II complex assembly or stability, and for proper Golgi localization of TRAPP and the Rab GTPase YPT31. This is TRAPP-associated protein TCA17 (TCA17) from Saccharomyces cerevisiae (strain ATCC 204508 / S288c) (Baker's yeast).